A 289-amino-acid polypeptide reads, in one-letter code: MTGREILHKMKESVKEKVGLGASASSADSGKGKSKMLKQITHGFHLVKGKAFHEMEDYVVAKFKEVDDNELGLFAIFDGHLSHEIPDYLCSHLFENILKEPNFWQEPEKAIKKAYYITDTTILDKADDLGKGGSTAVTAILINCQKLVVANVGDSRAVICQNGVAKPLSVDHEPNMEKDEIENRGGFVSNFPGDVPRVDGQLAVARAFGDKSLKMHLSSEPYVTVEIIDDDAEFLILASDGLWKVMSNQEAVDSIKGIKDAKAAAKHLAEEAVARKSSDDISVVVVKFQ.

In terms of domain architecture, PPM-type phosphatase spans 41 to 288 (THGFHLVKGK…DDISVVVVKF (248 aa)). Mn(2+)-binding residues include Asp-78, Gly-79, Asp-240, and Asp-279.

The protein belongs to the PP2C family. The cofactor is Mg(2+). It depends on Mn(2+) as a cofactor.

It carries out the reaction O-phospho-L-seryl-[protein] + H2O = L-seryl-[protein] + phosphate. The enzyme catalyses O-phospho-L-threonyl-[protein] + H2O = L-threonyl-[protein] + phosphate. This Arabidopsis thaliana (Mouse-ear cress) protein is Probable protein phosphatase 2C 39.